A 284-amino-acid chain; its full sequence is Nucleotide-binding protein NMB0738 (284 aa).

Residue 8–15 participates in ATP binding; that stretch reads GLSGSGKS. Residue 58–61 participates in GTP binding; that stretch reads DVRS.

Belongs to the RapZ-like family.

Functionally, displays ATPase and GTPase activities. The chain is Nucleotide-binding protein NMB0738 from Neisseria meningitidis serogroup B (strain ATCC BAA-335 / MC58).